The sequence spans 418 residues: Elongation factor 1-gamma 1 (418 aa).

A GST N-terminal domain is found at 1–82 (MALVLHTFDG…YVTRSKSDNP (82 aa)). The region spanning 87–213 (SLIEYAHIEQ…GDVKQADSVP (127 aa)) is the GST C-terminal domain. The disordered stretch occupies residues 211–265 (SVPQVQKKAAAPKEQKPKEAKKEAPKEAPKPKAAEKPEEEEEAPKPKPKNPLDLL). Positions 221-246 (APKEQKPKEAKKEAPKEAPKPKAAEK) are enriched in basic and acidic residues. The region spanning 258–418 (PKNPLDLLPP…EALLDAKCFK (161 aa)) is the EF-1-gamma C-terminal domain.

EF-1 is composed of four subunits: alpha, beta, delta, and gamma.

Functionally, probably plays a role in anchoring the complex to other cellular components. In Oryza sativa subsp. japonica (Rice), this protein is Elongation factor 1-gamma 1.